A 288-amino-acid polypeptide reads, in one-letter code: Quinate/shikimate dehydrogenase (288 aa).

2 residues coordinate substrate: lysine 71 and aspartate 107. Residues 132–135 (AGGA), 155–158 (NRRD), lysine 205, 232–235 (CVYN), and glycine 255 contribute to the NAD(+) site.

This sequence belongs to the shikimate dehydrogenase family. As to quaternary structure, homodimer.

It catalyses the reaction L-quinate + NAD(+) = 3-dehydroquinate + NADH + H(+). It carries out the reaction L-quinate + NADP(+) = 3-dehydroquinate + NADPH + H(+). The enzyme catalyses shikimate + NADP(+) = 3-dehydroshikimate + NADPH + H(+). The catalysed reaction is shikimate + NAD(+) = 3-dehydroshikimate + NADH + H(+). Its pathway is metabolic intermediate biosynthesis; chorismate biosynthesis; chorismate from D-erythrose 4-phosphate and phosphoenolpyruvate: step 4/7. In terms of biological role, the actual biological function of YdiB remains unclear, nor is it known whether 3-dehydroshikimate or quinate represents the natural substrate. Catalyzes the reversible NAD-dependent reduction of both 3-dehydroshikimate (DHSA) and 3-dehydroquinate to yield shikimate (SA) and quinate, respectively. It can use both NAD or NADP for catalysis, however it has higher catalytic efficiency with NAD. The sequence is that of Quinate/shikimate dehydrogenase from Shigella sonnei (strain Ss046).